The following is a 250-amino-acid chain: MGSQHSAAARPSSCRRKQEDDRDGLLAEREQEEAIAQFPYVEFTGRDSITCLTCQGTGYIPTEQVNELVALIPHSDQRLRPQRTKQYVLLSILLCLLASGLVVFFLFPHSVLVDDDGIKVVKVTFNKQDSLVILTIMATLKIRNSNFYTVAVTSLSSQIQYMNTVVSTYVTTNVSLIPPRSEQLVNFTGKAEMGGPFSYVYFFCTVPEILVHNIVIFMRTSVKISYIGLMTQSSLETHHYVDCGGNSTAI.

The disordered stretch occupies residues 1–25; it reads MGSQHSAAARPSSCRRKQEDDRDGL. G2 carries N-myristoyl glycine lipidation. Residues 16–25 show a composition bias toward basic and acidic residues; it reads RKQEDDRDGL. Residues 87–107 form a helical membrane-spanning segment; it reads YVLLSILLCLLASGLVVFFLF. N-linked (GlcNAc...) asparagine glycans are attached at residues N173 and N186. A helical membrane pass occupies residues 197–217; the sequence is FSYVYFFCTVPEILVHNIVIF.

Belongs to the TMEM106 family. Interacts with TMEM106B.

It localises to the endoplasmic reticulum membrane. The protein localises to the membrane. The polypeptide is Transmembrane protein 106C (TMEM106C) (Homo sapiens (Human)).